Reading from the N-terminus, the 257-residue chain is MSTGITYDEDRKTQLIAQYESVREVVNAEAKNVHVNENASKILLLVVSKLKPASDIQILYDHGVREFGENYVQELIEKAKLLPDDIKWHFIGGLQTNKCKDLAKVPNLYSVETIDSLKKAKKLNESRAKFQPDCNPILCNVQINTSHEDQKSGLNNEAEIFEVIDFFLSEECKYIKLNGLMTIGSWNVSHEDSKENRDFATLVEWKKKIDAKFGTSLKLSMGMSADFREAIRQGTAEVRIGTDIFGARPPKNEARII.

An N-acetylserine modification is found at serine 2. Lysine 49 carries the post-translational modification N6-(pyridoxal phosphate)lysine.

The protein belongs to the pyridoxal phosphate-binding protein YggS/PROSC family.

It is found in the cytoplasm. It localises to the nucleus. Its function is as follows. Pyridoxal 5'-phosphate (PLP)-binding protein, which may be involved in intracellular homeostatic regulation of pyridoxal 5'-phosphate (PLP), the active form of vitamin B6. The polypeptide is Pyridoxal phosphate homeostasis protein (Saccharomyces cerevisiae (strain ATCC 204508 / S288c) (Baker's yeast)).